Here is a 104-residue protein sequence, read N- to C-terminus: uncharacterized protein (104 aa).

A compositionally biased stretch (basic and acidic residues) spans Pro-58–Pro-71. Positions Pro-58–Ala-84 are disordered.

This is an uncharacterized protein from Mycobacterium tuberculosis (strain ATCC 25618 / H37Rv).